We begin with the raw amino-acid sequence, 1378 residues long: DNA-directed RNA polymerase subunit beta (1378 aa).

The protein belongs to the RNA polymerase beta chain family. The RNAP catalytic core consists of 2 alpha, 1 beta, 1 beta' and 1 omega subunit. When a sigma factor is associated with the core the holoenzyme is formed, which can initiate transcription.

The catalysed reaction is RNA(n) + a ribonucleoside 5'-triphosphate = RNA(n+1) + diphosphate. In terms of biological role, DNA-dependent RNA polymerase catalyzes the transcription of DNA into RNA using the four ribonucleoside triphosphates as substrates. The sequence is that of DNA-directed RNA polymerase subunit beta from Mesorhizobium japonicum (strain LMG 29417 / CECT 9101 / MAFF 303099) (Mesorhizobium loti (strain MAFF 303099)).